The following is a 1371-amino-acid chain: DNA-directed RNA polymerase subunit beta'' (1371 aa).

4 residues coordinate Zn(2+): cysteine 220, cysteine 293, cysteine 300, and cysteine 303.

This sequence belongs to the RNA polymerase beta' chain family. RpoC2 subfamily. In plastids the minimal PEP RNA polymerase catalytic core is composed of four subunits: alpha, beta, beta', and beta''. When a (nuclear-encoded) sigma factor is associated with the core the holoenzyme is formed, which can initiate transcription. Zn(2+) serves as cofactor.

It localises to the plastid. The protein resides in the chloroplast. The catalysed reaction is RNA(n) + a ribonucleoside 5'-triphosphate = RNA(n+1) + diphosphate. Its function is as follows. DNA-dependent RNA polymerase catalyzes the transcription of DNA into RNA using the four ribonucleoside triphosphates as substrates. This Lobularia maritima (Sweet alyssum) protein is DNA-directed RNA polymerase subunit beta''.